The following is a 337-amino-acid chain: Nucleoid-associated protein HSM_0096 (337 aa).

This sequence belongs to the YejK family.

Its subcellular location is the cytoplasm. The protein localises to the nucleoid. The chain is Nucleoid-associated protein HSM_0096 from Histophilus somni (strain 2336) (Haemophilus somnus).